The primary structure comprises 176 residues: MDSEFFQPVYPRHYGECLSSTPAPSFFSTHMYTILIAIVVLIIIIIVLIYLFSSRKKKAAAAIEEEDIQFINPYQDQQWAGVTPQPGIAKPAGASTGSAGKPVMGRPVTNKPVTNKPVTDRLGMAAGGPAAASAPAHPAELYTTATTQNTASQTMPADENLRQRNTYTHKDLENSL.

The helical transmembrane segment at Tyr32–Phe52 threads the bilayer. The disordered stretch occupies residues Val82–Leu176. Residues Gly123 to Thr154 show a composition bias toward low complexity. The interval Tyr142 to Thr154 is interaction with host DYNLL1.

It belongs to the asfivirus envelope protein p54 family. Interacts with the host light chain cytoplasmic dynein DYNLL1; this interaction is critical for intracellular microtubule-dependent virus transport toward viral factories.

Its subcellular location is the virion membrane. The protein localises to the host cytoplasm. It localises to the host cytoskeleton. The protein resides in the host endoplasmic reticulum membrane. Functionally, inner envelope protein involved, through its interaction with host dynein, in the intracellular microtubule-dependent transport of viral capsid toward viral factories. Seems to induce caspase-3 activation and apoptosis. Plays a role in virion morphogenesis by recruiting and transforming the host ER membranes into the precursors of the viral envelope. Involved in virus attachment to the host cell. The protein is Inner membrane protein p54 of African swine fever virus (isolate Tick/Malawi/Lil 20-1/1983) (ASFV).